A 602-amino-acid polypeptide reads, in one-letter code: UvrABC system protein C (602 aa).

Positions 15-92 (DLPGSYQMKD…IQKYQPYYNI (78 aa)) constitute a GIY-YIG domain. The region spanning 197-232 (GKAKASLTAKMERAAKNLQFERAAEIRDQLHYIEQT) is the UVR domain.

The protein belongs to the UvrC family. Interacts with UvrB in an incision complex.

It is found in the cytoplasm. Its function is as follows. The UvrABC repair system catalyzes the recognition and processing of DNA lesions. UvrC both incises the 5' and 3' sides of the lesion. The N-terminal half is responsible for the 3' incision and the C-terminal half is responsible for the 5' incision. The chain is UvrABC system protein C from Lacticaseibacillus paracasei (strain ATCC 334 / BCRC 17002 / CCUG 31169 / CIP 107868 / KCTC 3260 / NRRL B-441) (Lactobacillus paracasei).